Reading from the N-terminus, the 99-residue chain is Transmembrane protein 14A (99 aa).

3 consecutive transmembrane segments (helical) span residues 1-21 (MDLI…LGYK), 24-44 (GGVP…YGAY), and 79-99 (PAGL…LLLL).

Belongs to the TMEM14 family.

Its subcellular location is the mitochondrion membrane. It is found in the endoplasmic reticulum membrane. In terms of biological role, inhibits apoptosis via negative regulation of the mitochondrial outer membrane permeabilization involved in apoptotic signaling pathway. The polypeptide is Transmembrane protein 14A (TMEM14A) (Sus scrofa (Pig)).